A 183-amino-acid chain; its full sequence is Translation initiation factor IF-3 (183 aa).

This sequence belongs to the IF-3 family. Monomer.

The protein resides in the cytoplasm. Its function is as follows. IF-3 binds to the 30S ribosomal subunit and shifts the equilibrium between 70S ribosomes and their 50S and 30S subunits in favor of the free subunits, thus enhancing the availability of 30S subunits on which protein synthesis initiation begins. This Serratia marcescens protein is Translation initiation factor IF-3.